Here is a 280-residue protein sequence, read N- to C-terminus: 2-dehydro-3-deoxyphosphooctonate aldolase (280 aa).

It belongs to the KdsA family.

The protein resides in the cytoplasm. The catalysed reaction is D-arabinose 5-phosphate + phosphoenolpyruvate + H2O = 3-deoxy-alpha-D-manno-2-octulosonate-8-phosphate + phosphate. Its pathway is carbohydrate biosynthesis; 3-deoxy-D-manno-octulosonate biosynthesis; 3-deoxy-D-manno-octulosonate from D-ribulose 5-phosphate: step 2/3. The protein operates within bacterial outer membrane biogenesis; lipopolysaccharide biosynthesis. The polypeptide is 2-dehydro-3-deoxyphosphooctonate aldolase (Rhizobium meliloti (strain 1021) (Ensifer meliloti)).